A 313-amino-acid polypeptide reads, in one-letter code: Porphobilinogen deaminase (313 aa).

An S-(dipyrrolylmethanemethyl)cysteine modification is found at Cys-242.

The protein belongs to the HMBS family. Monomer. Dipyrromethane is required as a cofactor.

It carries out the reaction 4 porphobilinogen + H2O = hydroxymethylbilane + 4 NH4(+). Its pathway is porphyrin-containing compound metabolism; protoporphyrin-IX biosynthesis; coproporphyrinogen-III from 5-aminolevulinate: step 2/4. Functionally, tetrapolymerization of the monopyrrole PBG into the hydroxymethylbilane pre-uroporphyrinogen in several discrete steps. This Pseudomonas putida (strain ATCC 47054 / DSM 6125 / CFBP 8728 / NCIMB 11950 / KT2440) protein is Porphobilinogen deaminase.